The sequence spans 417 residues: DNA primase small subunit (417 aa).

Met1 is modified (N-acetylmethionine). Active-site residues include Glu44, Asp109, and Asp111. 2 residues coordinate Mg(2+): Asp109 and Asp111. Positions 109 and 111 each coordinate Mn(2+). Residue 109–111 participates in a ribonucleoside 5'-triphosphate binding; the sequence is DID. Zn(2+) is bound by residues Cys121, Cys122, Cys128, and Cys131. Residues 121–131 carry the Zinc knuckle motif motif; it reads CCSSADICSKC. Position 160 to 166 (160 to 166) interacts with a ribonucleoside 5'-triphosphate; sequence SGRRGVH. Asp305 is a Mg(2+) binding site. Asp305 is a Mn(2+) binding site. Residues 314–317 and His323 contribute to the a ribonucleoside 5'-triphosphate site; that span reads HLLK.

Belongs to the eukaryotic-type primase small subunit family. As to quaternary structure, heterodimer of a catalytic subunit PRIM1 and a regulatory subunit PRIM2, also known as the DNA primase complex. Interacts with PRIM2/p58 (via C-terminus). Component of the alpha DNA polymerase complex (also known as the alpha DNA polymerase-primase complex) consisting of four subunits: the catalytic subunit POLA1, the regulatory subunit POLA2, and the primase complex subunits PRIM1 and PRIM2 respectively. Within the complex, POLA1 directly interacts with PRIM2. Mg(2+) serves as cofactor. The cofactor is Mn(2+).

The catalysed reaction is ssDNA + n NTP = ssDNA/pppN(pN)n-1 hybrid + (n-1) diphosphate.. The presence of the regulatory subunit PRIM2/p58 accelerates the kinetics of initiation and primer extension. In terms of biological role, catalytic subunit of the DNA primase complex and component of the DNA polymerase alpha complex (also known as the alpha DNA polymerase-primase complex) which play an essential role in the initiation of DNA synthesis. During the S phase of the cell cycle, the DNA polymerase alpha complex (composed of a catalytic subunit POLA1, an accessory subunit POLA2 and two primase subunits, the catalytic subunit PRIM1 and the regulatory subunit PRIM2) is recruited to DNA at the replicative forks via direct interactions with MCM10 and WDHD1. The primase subunit of the polymerase alpha complex initiates DNA synthesis by oligomerising short RNA primers on both leading and lagging strands. These primers are initially extended by the polymerase alpha catalytic subunit and subsequently transferred to polymerase delta and polymerase epsilon for processive synthesis on the lagging and leading strand, respectively. In the primase complex, both subunits are necessary for the initial di-nucleotide formation, but the extension of the primer depends only on the catalytic subunit. Can add both ribo- and deoxynucleotides during elongation of the primers. Synthesizes 9-mer RNA primers (also known as the 'unit length' RNA primers). Incorporates only ribonucleotides in the presence of ribo- and deoxy-nucleotide triphosphates (rNTPs, dNTPs). Requires template thymine or cytidine to start the RNA primer synthesis, with an adenine or guanine at its 5'-end. Binds single stranded DNA. This Mus musculus (Mouse) protein is DNA primase small subunit (Prim1).